Reading from the N-terminus, the 268-residue chain is Phosphatidylglycerol--prolipoprotein diacylglyceryl transferase (268 aa).

The next 4 membrane-spanning stretches (helical) occupy residues 14–34 (LGPI…FAGW), 57–77 (LTFY…IIFY), 90–110 (FFLW…LIAF), and 117–137 (IGAN…IGLG). Residue R140 participates in a 1,2-diacyl-sn-glycero-3-phospho-(1'-sn-glycerol) binding. A run of 3 helical transmembrane segments spans residues 174–194 (QLFE…LVTI), 200–220 (YLVL…CEFF), and 240–260 (ILSI…FIKI).

Belongs to the Lgt family.

It localises to the cell inner membrane. The catalysed reaction is L-cysteinyl-[prolipoprotein] + a 1,2-diacyl-sn-glycero-3-phospho-(1'-sn-glycerol) = an S-1,2-diacyl-sn-glyceryl-L-cysteinyl-[prolipoprotein] + sn-glycerol 1-phosphate + H(+). It participates in protein modification; lipoprotein biosynthesis (diacylglyceryl transfer). Functionally, catalyzes the transfer of the diacylglyceryl group from phosphatidylglycerol to the sulfhydryl group of the N-terminal cysteine of a prolipoprotein, the first step in the formation of mature lipoproteins. The polypeptide is Phosphatidylglycerol--prolipoprotein diacylglyceryl transferase (Francisella tularensis subsp. tularensis (strain FSC 198)).